The chain runs to 702 residues: MA3 DOMAIN-CONTAINING TRANSLATION REGULATORY FACTOR 1 (702 aa).

A disordered region spans residues 39 to 66; that stretch reads LNIKSPTGGKGPVAGIPNRHVRRTHSGK. Residues 57–66 are compositionally biased toward basic residues; it reads RHVRRTHSGK. In terms of domain architecture, MI 1 spans 122–243; the sequence is DYKKSVVSII…PPVFLVRSKK (122 aa). Positions 273-280 match the Nuclear localization signal 1 motif; that stretch reads EKKWGGST. MI domains are found at residues 286-407, 420-541, and 583-702; these read ETKK…TSDQ, QYKK…DIST, and DAKD…SATQ. The Nuclear localization signal 2 motif lies at 458-465; sequence LKRLITLA.

Belongs to the PDCD4 family. Binds to EIF4A1, S6K1 and S6K2. The association with ribosomes is modulated by cellular energy status and TOR activity. Phosphorylation by S6 kinases (e.g. S6K1 and S6K2) is modulated by cellular energy status and TOR activity. Mostly expressed in vegetative tissues, such as leaves, roots and stems, and, to a lower extent, in reproductive tissues, such as flower buds and flowers.

It is found in the nucleus. The protein resides in the cytoplasm. The protein localises to the cytosol. Functionally, involved in target of rapamycin (TOR)-regulated translation control, especially under energy-deficient conditions. This chain is MA3 DOMAIN-CONTAINING TRANSLATION REGULATORY FACTOR 1, found in Arabidopsis thaliana (Mouse-ear cress).